Here is a 165-residue protein sequence, read N- to C-terminus: Adenosine 5'-monophosphoramidase HINT3 (165 aa).

Residues Met-1–Glu-23 form a disordered region. Position 2 is an N-acetylalanine (Ala-2). An HIT domain is found at Val-32–Lys-143. AMP is bound by residues Asp-59–Ile-60 and His-128–His-130. Positions His-126–His-130 match the Histidine triad motif motif. His-128 acts as the Tele-AMP-histidine intermediate in catalysis.

It belongs to the HINT family. Forms dimers to octamers and even larger oligomer. Interacts with CALM1.

It is found in the cytoplasm. The protein resides in the nucleus. The enzyme catalyses adenosine 5'-phosphoramidate + H2O = AMP + NH4(+). Its function is as follows. Exhibits adenosine 5'-monophosphoramidase activity, hydrolyzing purine nucleotide phosphoramidates with a single phosphate group such as adenosine 5'monophosphoramidate (AMP-NH2) to yield AMP and NH2. Hydrolyzes lysyl-AMP (AMP-N-epsilon-(N-alpha-acetyl lysine methyl ester)) generated by lysine tRNA ligase. The chain is Adenosine 5'-monophosphoramidase HINT3 (Hint3) from Mus musculus (Mouse).